Here is a 126-residue protein sequence, read N- to C-terminus: Probable S-adenosyl-L-methionine-binding protein MJ1583 (126 aa).

Residues 4 to 126 form the TsaA-like domain; the sequence is LKPIGVVEQN…FSEKLDCPKI (123 aa). S-adenosyl-L-methionine-binding positions include 45–46, Arg75, and 106–109; these read HK and YNET.

The protein belongs to the tRNA methyltransferase O family.

This chain is Probable S-adenosyl-L-methionine-binding protein MJ1583, found in Methanocaldococcus jannaschii (strain ATCC 43067 / DSM 2661 / JAL-1 / JCM 10045 / NBRC 100440) (Methanococcus jannaschii).